Reading from the N-terminus, the 338-residue chain is DNA-directed RNA polymerase subunit alpha (338 aa).

The segment at 1–233 (MLREEVAVST…DLFIPFLHAE (233 aa)) is alpha N-terminal domain (alpha-NTD). An alpha C-terminal domain (alpha-CTD) region spans residues 266–338 (IALKFIFIDQ…IDLPKNKFSN (73 aa)).

Belongs to the RNA polymerase alpha chain family. In terms of assembly, in plastids the minimal PEP RNA polymerase catalytic core is composed of four subunits: alpha, beta, beta', and beta''. When a (nuclear-encoded) sigma factor is associated with the core the holoenzyme is formed, which can initiate transcription.

It is found in the plastid. The protein localises to the chloroplast. The enzyme catalyses RNA(n) + a ribonucleoside 5'-triphosphate = RNA(n+1) + diphosphate. Its function is as follows. DNA-dependent RNA polymerase catalyzes the transcription of DNA into RNA using the four ribonucleoside triphosphates as substrates. This is DNA-directed RNA polymerase subunit alpha from Nandina domestica (Heavenly bamboo).